A 286-amino-acid chain; its full sequence is Nucleotide-binding protein APL_0334 (286 aa).

An ATP-binding site is contributed by 8–15 (GRSGSGKS). 56 to 59 (DIRN) serves as a coordination point for GTP.

This sequence belongs to the RapZ-like family.

Its function is as follows. Displays ATPase and GTPase activities. This is Nucleotide-binding protein APL_0334 from Actinobacillus pleuropneumoniae serotype 5b (strain L20).